We begin with the raw amino-acid sequence, 485 residues long: MRSAPAIRACQRICRCLLSGFGGQVDGRQPEQLSKGTGSFVGPVRSQAELPRNEPREAPESGGEGSEPLVEICRKRRFLSGTKQQLSRDSLLNGCHPGLGPLGIELRKNLAAEWWSSVVVFREQVFPVDALHREPGPSLPVDNGFRLVSAETLREILQDKELSKEQLVAFLENLLNTSGKLRENLLHGALEHYVSYLDLVNKRLPFGLAQIGACFHPVSDTKQTPDGVKRIGEKTEASLVWFTSARTASQWLDFWLRHRLLWWRKFAMSPSNFSSGDCQDEAGRKGNRLYYNFPWGKEPIETLWNLGDHELLHMYPGSVAQVHGRDGRKNVVPSVLSINGDLDRGMLAYLYDSFQLTENSFTRKKDLHRKVLKLHPCLAPIKAALDVGRGPTVELRQVCQGLFNELLENGISVWPGYLETVQSSLEQLYSKYDEMSILFTVLITEATLENGLIQLRSRDTTMKEMMHISKVKDFLTKYISSAKNV.

A disordered region spans residues 28–67; the sequence is RQPEQLSKGTGSFVGPVRSQAELPRNEPREAPESGGEGSE.

As to quaternary structure, heterotrimer composed of a catalytic subunit and a homodimer of accessory subunits (POLG:POLG2).

The protein resides in the mitochondrion. The protein localises to the mitochondrion matrix. It localises to the mitochondrion nucleoid. Its function is as follows. Accessory subunit of DNA polymerase gamma solely responsible for replication of mitochondrial DNA (mtDNA). Acts as an allosteric regulator of the holoenzyme activities. Enhances the polymerase activity and the processivity of POLG by increasing its interactions with the DNA template. Suppresses POLG exonucleolytic proofreading especially toward homopolymeric templates bearing mismatched termini. Binds to single-stranded DNA. This Bos taurus (Bovine) protein is DNA polymerase subunit gamma-2 (POLG2).